The chain runs to 341 residues: Glycerol-3-phosphate dehydrogenase [NAD(P)+] (341 aa).

S12, W13, R33, and K107 together coordinate NADPH. Residues K107, G134, and T136 each coordinate sn-glycerol 3-phosphate. A138 is a binding site for NADPH. Residues K189, D242, S252, R253, and N254 each contribute to the sn-glycerol 3-phosphate site. K189 acts as the Proton acceptor in catalysis. R253 contacts NADPH. NADPH-binding residues include V277 and E279.

Belongs to the NAD-dependent glycerol-3-phosphate dehydrogenase family.

The protein localises to the cytoplasm. It carries out the reaction sn-glycerol 3-phosphate + NAD(+) = dihydroxyacetone phosphate + NADH + H(+). The enzyme catalyses sn-glycerol 3-phosphate + NADP(+) = dihydroxyacetone phosphate + NADPH + H(+). It functions in the pathway membrane lipid metabolism; glycerophospholipid metabolism. Its function is as follows. Catalyzes the reduction of the glycolytic intermediate dihydroxyacetone phosphate (DHAP) to sn-glycerol 3-phosphate (G3P), the key precursor for phospholipid synthesis. In Halothermothrix orenii (strain H 168 / OCM 544 / DSM 9562), this protein is Glycerol-3-phosphate dehydrogenase [NAD(P)+].